Consider the following 435-residue polypeptide: Monodehydroascorbate reductase 2 (435 aa).

FAD-binding positions include 14–17, Glu-41, Arg-48, Lys-53, Ile-96, and 147–148; these read GGVA and RE. NAD(+) contacts are provided by residues 172-178, Glu-196, Arg-202, and Gly-261; that span reads GGYIGLE. 174-178 provides a ligand contact to NADP(+); that stretch reads YIGLE. Residues Arg-202 and Gly-261 each coordinate NADP(+). Asp-298 lines the FAD pocket. 314–315 lines the NAD(+) pocket; it reads EH. 314 to 315 contacts NADP(+); that stretch reads EH. Val-316 serves as a coordination point for FAD. Arg-320 lines the L-ascorbate pocket. Tyr-349 is a binding site for FAD. An NAD(+)-binding site is contributed by Tyr-349. Tyr-349 contributes to the NADP(+) binding site. L-ascorbate is bound at residue Arg-351. Residue Ser-417 is modified to Phosphoserine.

This sequence belongs to the FAD-dependent oxidoreductase family. Requires FAD as cofactor.

The protein localises to the cytoplasm. It catalyses the reaction 2 monodehydro-L-ascorbate radical + NADH + H(+) = 2 L-ascorbate + NAD(+). Catalyzes the conversion of monodehydroascorbate to ascorbate, oxidizing NADH in the process. In Arabidopsis thaliana (Mouse-ear cress), this protein is Monodehydroascorbate reductase 2.